Here is a 263-residue protein sequence, read N- to C-terminus: Eukaryotic translation initiation factor 3 subunit J-B (263 aa).

Acidic residues-rich tracts occupy residues methionine 1–glutamate 13 and glutamate 30–glutamate 50. 2 disordered regions span residues methionine 1–lysine 75 and lysine 214–glycine 235. Residues glutamate 30–alanine 127 are a coiled coil. The span at glutamate 51–lysine 75 shows a compositional bias: basic and acidic residues.

It belongs to the eIF-3 subunit J family. Component of the eukaryotic translation initiation factor 3 (eIF-3) complex, which is composed of 13 subunits: eif3a, eif3b, eif3c, eif3d, eif3e, eif3f, eif3g, eif3h, eif3i, eif3j, eif3k, eif3l and eif3m.

It localises to the cytoplasm. Functionally, component of the eukaryotic translation initiation factor 3 (eIF-3) complex, which is involved in protein synthesis of a specialized repertoire of mRNAs and, together with other initiation factors, stimulates binding of mRNA and methionyl-tRNAi to the 40S ribosome. The eIF-3 complex specifically targets and initiates translation of a subset of mRNAs involved in cell proliferation. This is Eukaryotic translation initiation factor 3 subunit J-B (eif3jb) from Danio rerio (Zebrafish).